Reading from the N-terminus, the 146-residue chain is Snake venom vascular endothelial growth factor toxin TfsvVEGF (146 aa).

Residues 1-24 form the signal peptide; it reads MAAYLLAVAILFCIQGWPSGTVQG. The residue at position 25 (Gln-25) is a Pyrrolidone carboxylic acid. 3 disulfides stabilise this stretch: Cys-38-Cys-80, Cys-69-Cys-115, and Cys-73-Cys-117. The segment covering 118-139 has biased composition (basic and acidic residues); that stretch reads RPRSPGDVNNGKDKRNPEEGGP. The interval 118 to 146 is disordered; sequence RPRSPGDVNNGKDKRNPEEGGPRARFPFV.

Belongs to the PDGF/VEGF growth factor family. Snake venom VEGF subfamily. In terms of assembly, homodimer; disulfide-linked. Interacts with VEGF receptor-1 (FLT1) with a high affinity, whereas it binds to VEGF receptor-2 (KDR) with a low affinity. Does not bind VEGF receptor-3 (FLT4). As to expression, expressed by the venom gland.

The protein resides in the secreted. Functionally, snake venom VEGFs may contribute to venom dispersion and prey subjugation by inducing vascular permeability and hypotension. This protein strongly increases vascular permeability, and weakly stimulates angiogenesis. Interacts with VEGF receptor-1 (FLT1) with a high affinity, whereas it binds to VEGF receptor-2 (KDR) with a low affinity. Stimulates autophosphorylation of VEGF receptor-1 (VEGFR-1/FLT1), and VEGF receptor-2 (VEGFR-2/KDR). This is Snake venom vascular endothelial growth factor toxin TfsvVEGF from Protobothrops flavoviridis (Habu).